The following is a 440-amino-acid chain: Alpha-methylserine aldolase (440 aa).

N6-(pyridoxal phosphate)lysine is present on Lys-255.

It belongs to the SHMT family. Alpha-methylserine aldolase subfamily. Homodimer. It depends on pyridoxal 5'-phosphate as a cofactor.

It carries out the reaction 2-methyl-L-serine = formaldehyde + L-alanine. Its function is as follows. Catalyzes the reversible interconversion of alpha-methyl-L-serine to L-alanine and formaldehyde. This is Alpha-methylserine aldolase from Variovorax paradoxus.